A 232-amino-acid chain; its full sequence is Small ribosomal subunit protein uS3 (232 aa).

A KH type-2 domain is found at 39-107 (VRQFLTKELA…PAQINIAEVR (69 aa)).

It belongs to the universal ribosomal protein uS3 family. Part of the 30S ribosomal subunit. Forms a tight complex with proteins S10 and S14.

In terms of biological role, binds the lower part of the 30S subunit head. Binds mRNA in the 70S ribosome, positioning it for translation. This Yersinia pestis bv. Antiqua (strain Antiqua) protein is Small ribosomal subunit protein uS3.